Reading from the N-terminus, the 204-residue chain is DNA-binding transcriptional activator EvgA (204 aa).

The Response regulatory domain occupies 2 to 117; it reads NAIIIDDHPL…NIIAAIEAAK (116 aa). Asp52 carries the 4-aspartylphosphate modification. Residues 137–202 enclose the HTH luxR-type domain; the sequence is DQQKLDSLSK…DLYTFAQRNK (66 aa). A DNA-binding region (H-T-H motif) is located at residues 161 to 180; that stretch reads NNDIAEKMFISNKTVSTYKS.

As to quaternary structure, homodimer. Phosphorylated by EvgS.

The protein resides in the cytoplasm. Member of the two-component regulatory system EvgS/EvgA. Regulates the expression of emrKY operon and yfdX. Also seems to control expression of at least one other multidrug efflux operon. This Escherichia coli O157:H7 protein is DNA-binding transcriptional activator EvgA (evgA).